The chain runs to 637 residues: MNDWSIDDARAGYNVTHWSQGFYGISDQGEVTVSPDPKNPEYKIGLNELAKDMVKAGVALPVLVRFPQILHHRVNSLCQAFDQAIQKYEYQADYLLVYPIKVNQQQTVVEEILASQASKEVPQLGLEAGSKPELMAVLAMAQKASSVIVCNGYKDNEYIRLALIGEKLGHKVYIVLEKLSELKMVLAESKRLGVTPRLGLRARLAFQGKGKWQASGGEKSKFGLSAAQILTVVDQLKQNDMLDSLQLLHFHLGSQIANIRDIRQGVSEAGRFYCELRELGASVNCFDVGGGLAVDYDGTRSQSNNSMNYGLTEYANNIVNVLTDICNEYAQPMPRIISESGRYLTAHHAVLITDVIGTEAYQPENIQPPAEESPQLLHNMWHSWSEISGRADQRALIEIYHDSQSDLQEAQSLFALGQLSLAERAWAEQANLRVCHEVQGLLSTKNRYHRPIIDELNEKLADKFFVNFSLFQSLPDAWGIDQVFPVLPLSGLDKAPERRAVMLDITCDSDGIVDQYVDGQGIETTLPVPAWSAESPYLIGFFLVGAYQEILGDMHNLFGDTNSAVVRIEENGVTNIESVLAGDTVADVLRYVNLDAVAFMRTYEELVNLHIEEDERAQILEELQVGLKGYTYLEDFS.

Lys101 bears the N6-(pyridoxal phosphate)lysine mark. Residue 286-296 (FDVGGGLAVDY) coordinates substrate.

The protein belongs to the Orn/Lys/Arg decarboxylase class-II family. SpeA subfamily. The cofactor is Mg(2+). It depends on pyridoxal 5'-phosphate as a cofactor.

The enzyme catalyses L-arginine + H(+) = agmatine + CO2. Its pathway is amine and polyamine biosynthesis; agmatine biosynthesis; agmatine from L-arginine: step 1/1. Functionally, catalyzes the biosynthesis of agmatine from arginine. The sequence is that of Biosynthetic arginine decarboxylase from Shewanella putrefaciens (strain CN-32 / ATCC BAA-453).